The chain runs to 49 residues: Small, acid-soluble spore protein K (49 aa).

Residues 1–49 form a disordered region; it reads MRNKSRGFPNMNNNKFEGEPRAKDDFASKRPDGSTNTHPQERMRASGKR. Basic and acidic residues-rich tracts occupy residues 16-32 and 39-49; these read FEGE…KRPD and PQERMRASGKR.

It belongs to the SspK family.

It is found in the spore core. This chain is Small, acid-soluble spore protein K, found in Bacillus licheniformis (strain ATCC 14580 / DSM 13 / JCM 2505 / CCUG 7422 / NBRC 12200 / NCIMB 9375 / NCTC 10341 / NRRL NRS-1264 / Gibson 46).